A 303-amino-acid chain; its full sequence is Oxygen-dependent coproporphyrinogen-III oxidase (303 aa).

Substrate is bound at residue Ser93. A divalent metal cation is bound by residues His97 and His107. The active-site Proton donor is the His107. Substrate is bound at residue 109-111; it reads NVR. 2 residues coordinate a divalent metal cation: His146 and His176. The interval 241 to 276 is important for dimerization; that stretch reads YVEFNLVYDRGTLFGLQSGGRTESILMSLPPQVRWG. Position 259–261 (259–261) interacts with substrate; that stretch reads GGR.

The protein belongs to the aerobic coproporphyrinogen-III oxidase family. Homodimer. Requires a divalent metal cation as cofactor.

It localises to the cytoplasm. The catalysed reaction is coproporphyrinogen III + O2 + 2 H(+) = protoporphyrinogen IX + 2 CO2 + 2 H2O. It participates in porphyrin-containing compound metabolism; protoporphyrin-IX biosynthesis; protoporphyrinogen-IX from coproporphyrinogen-III (O2 route): step 1/1. Functionally, involved in the heme biosynthesis. Catalyzes the aerobic oxidative decarboxylation of propionate groups of rings A and B of coproporphyrinogen-III to yield the vinyl groups in protoporphyrinogen-IX. This Pseudomonas putida (strain GB-1) protein is Oxygen-dependent coproporphyrinogen-III oxidase.